Reading from the N-terminus, the 407-residue chain is tRNA-specific 2-thiouridylase MnmA (407 aa).

ATP contacts are provided by residues 20–27 and Leu46; that span reads AMSGGVDS. Cys114 functions as the Nucleophile in the catalytic mechanism. Cys114 and Cys210 are joined by a disulfide. Gly138 contacts ATP. The tract at residues 160–162 is interaction with tRNA; sequence RDQ. The active-site Cysteine persulfide intermediate is Cys210.

The protein belongs to the MnmA/TRMU family.

The protein resides in the cytoplasm. It catalyses the reaction S-sulfanyl-L-cysteinyl-[protein] + uridine(34) in tRNA + AH2 + ATP = 2-thiouridine(34) in tRNA + L-cysteinyl-[protein] + A + AMP + diphosphate + H(+). In terms of biological role, catalyzes the 2-thiolation of uridine at the wobble position (U34) of tRNA, leading to the formation of s(2)U34. This chain is tRNA-specific 2-thiouridylase MnmA, found in Bartonella tribocorum (strain CIP 105476 / IBS 506).